A 415-amino-acid polypeptide reads, in one-letter code: Lipid-A-disaccharide synthase (415 aa).

The segment at 1-21 (MNSLPESGSDGQSSADPSQKA) is disordered.

Belongs to the LpxB family.

The enzyme catalyses a lipid X + a UDP-2-N,3-O-bis[(3R)-3-hydroxyacyl]-alpha-D-glucosamine = a lipid A disaccharide + UDP + H(+). It participates in bacterial outer membrane biogenesis; LPS lipid A biosynthesis. Condensation of UDP-2,3-diacylglucosamine and 2,3-diacylglucosamine-1-phosphate to form lipid A disaccharide, a precursor of lipid A, a phosphorylated glycolipid that anchors the lipopolysaccharide to the outer membrane of the cell. In Gluconobacter oxydans (strain 621H) (Gluconobacter suboxydans), this protein is Lipid-A-disaccharide synthase.